We begin with the raw amino-acid sequence, 518 residues long: Glutamate--cysteine ligase (518 aa).

The protein belongs to the glutamate--cysteine ligase type 1 family. Type 1 subfamily.

It catalyses the reaction L-cysteine + L-glutamate + ATP = gamma-L-glutamyl-L-cysteine + ADP + phosphate + H(+). Its pathway is sulfur metabolism; glutathione biosynthesis; glutathione from L-cysteine and L-glutamate: step 1/2. The chain is Glutamate--cysteine ligase from Escherichia coli O7:K1 (strain IAI39 / ExPEC).